We begin with the raw amino-acid sequence, 329 residues long: Ficolin-2 (329 aa).

A signal peptide spans 1–29; the sequence is MELGGAAGALGPSGPLLVCLCFGTLAAQA. The Collagen-like domain occupies 52–111; the sequence is GCPGLPGAPGLKGETGAAGLKGERGLPGVPGKAGPAGPKGSTGAQGEKGARGEKGESGQL. The tract at residues 64–113 is disordered; it reads GETGAAGLKGERGLPGVPGKAGPAGPKGSTGAQGEKGARGEKGESGQLHS. Positions 77-90 are enriched in low complexity; the sequence is LPGVPGKAGPAGPK. A Fibrinogen C-terminal domain is found at 112 to 329; it reads HSCATGPRTC…KVSEMKLRLT (218 aa). Intrachain disulfides connect Cys114/Cys142 and Cys121/Cys149. Residues Asp265, Asp267, Ser269, and Ser271 each contribute to the Ca(2+) site. A disulfide bridge connects residues Cys273 and Cys286. A glycan (N-linked (GlcNAc...) asparagine) is linked at Asn316.

Belongs to the ficolin lectin family. In terms of assembly, homotrimer. Interacts with elastin. Interacts with MASP1 and MASP2.

It localises to the secreted. May function in innate immunity through activation of the lectin complement pathway. Calcium-dependent and GlcNAc-binding lectin. This Bos taurus (Bovine) protein is Ficolin-2 (FCN2).